The primary structure comprises 974 residues: Membrane-associated phosphatidylinositol transfer protein 3 (974 aa).

Ser-30, Ser-31, Ser-109, Ser-295, Ser-298, Ser-321, Ser-343, and Ser-495 each carry phosphoserine. Residues Gly-284–Val-304 form a disordered region. The segment covering Arg-292 to Thr-302 has biased composition (polar residues). Disordered regions lie at residues Ile-323–Ser-346 and Ser-491–Pro-536. A DDHD domain is found at Phe-390–Arg-594. Over residues Glu-520–Ser-533 the composition is skewed to low complexity. Phosphoserine is present on residues Ser-612, Ser-907, Ser-928, and Ser-946. The interval Met-927 to Pro-974 is disordered.

It belongs to the PtdIns transfer protein family. PI transfer class IIA subfamily. In terms of assembly, interacts with PTK2B via its C-terminus. In terms of tissue distribution, detected in brain and spleen, and at low levels in ovary.

It localises to the endomembrane system. Catalyzes the transfer of phosphatidylinositol and phosphatidylcholine between membranes (in vitro). Binds calcium ions. In Homo sapiens (Human), this protein is Membrane-associated phosphatidylinositol transfer protein 3 (PITPNM3).